The primary structure comprises 405 residues: G1/S-specific cyclin-D (405 aa).

Residues 76 to 200 (FYNCMEYEEA…LIVTTLQWET (125 aa)) form the Cyclin N-terminal domain. Positions 301–405 (YTSEDAEKTE…STPPKIFKTL (105 aa)) are disordered. The segment covering 311-321 (PTPSAPASTQE) has biased composition (polar residues). Residues 326 to 335 (QELKELKEEP) show a composition bias toward basic and acidic residues. The segment covering 358-380 (SEQTPSTPLNDSGFSSDVSSPAS) has biased composition (polar residues).

The protein belongs to the cyclin family. Cyclin D subfamily. As to quaternary structure, interacts with cdk-4; the interaction is likely involved in regulating cdk-4 activity.

Functionally, in association with cdk-4, regulates the progression through the G1 phase of the cell cycle during postembryonic development. Regulates proliferation of the coelomocyte lineage and intestinal cells during late embryogenesis. In complex with cdk-4, involved in sex determination during gonadogenesis by regulating the asymmetric division of the somatic gonadal precursor cell (SGP). The chain is G1/S-specific cyclin-D from Caenorhabditis elegans.